We begin with the raw amino-acid sequence, 446 residues long: NADH-quinone oxidoreductase subunit D (446 aa).

The protein belongs to the complex I 49 kDa subunit family. As to quaternary structure, NDH-1 is composed of 14 different subunits. Subunits NuoB, C, D, E, F, and G constitute the peripheral sector of the complex.

The protein resides in the cell membrane. The enzyme catalyses a quinone + NADH + 5 H(+)(in) = a quinol + NAD(+) + 4 H(+)(out). Functionally, NDH-1 shuttles electrons from NADH, via FMN and iron-sulfur (Fe-S) centers, to quinones in the respiratory chain. The immediate electron acceptor for the enzyme in this species is believed to be a menaquinone. Couples the redox reaction to proton translocation (for every two electrons transferred, four hydrogen ions are translocated across the cytoplasmic membrane), and thus conserves the redox energy in a proton gradient. In Mycobacterium sp. (strain JLS), this protein is NADH-quinone oxidoreductase subunit D.